The sequence spans 205 residues: Thymidylate kinase (205 aa).

ATP is bound at residue 11-18; that stretch reads GPEGSGKT.

It belongs to the thymidylate kinase family.

The enzyme catalyses dTMP + ATP = dTDP + ADP. In terms of biological role, phosphorylation of dTMP to form dTDP in both de novo and salvage pathways of dTTP synthesis. The polypeptide is Thymidylate kinase (Clostridium novyi (strain NT)).